A 2742-amino-acid chain; its full sequence is Polycystin-1-like protein 1 (2742 aa).

Residues 1 to 1602 (MFCLWIFSLA…LDQFLSVSRD (1602 aa)) are Extracellular-facing. N-linked (GlcNAc...) asparagine glycans are attached at residues Asn35, Asn133, Asn149, Asn220, and Asn267. 2 PKD domains span residues 286 to 372 (AVRI…VKLN) and 370 to 454 (KLNR…PCQP). Asn383, Asn397, Asn486, Asn545, Asn693, Asn709, and Asn735 each carry an N-linked (GlcNAc...) asparagine glycan. The 887-residue stretch at 452–1338 (CQPPPVKNLG…ITFFLPASLI (887 aa)) folds into the REJ domain. 2 disordered regions span residues 767 to 829 (SPSR…QSDP) and 846 to 908 (DLRG…RPSV). Residues 779-799 (SELTDSPVSSVTVGFSGSESF) show a composition bias toward polar residues. The span at 880–893 (SFPSDSDSFSHSSS) shows a compositional bias: low complexity. N-linked (GlcNAc...) asparagine glycans are attached at residues Asn1080, Asn1101, Asn1201, Asn1318, Asn1437, Asn1490, and Asn1568. Residues 1436–1587 (HNFSITQEHL…KVLQQQIQSS (152 aa)) form the GAIN-B domain. 2 disulfide bridges follow: Cys1541/Cys1569 and Cys1556/Cys1571. The tract at residues 1541–1587 (CLSWEDQQGSWTQNGCRAQTNDKTSAVNCSCHHLKPLKVLQQQIQSS) is GPS. The chain crosses the membrane as a helical span at residues 1603–1623 (LTVVFVLLLCVSLNIPVLVWC). Topologically, residues 1624–1812 (KKTDATSEEN…SPHLFTRAQR (189 aa)) are cytoplasmic. Positions 1648–1769 (HFYAVTVHTG…GDGQVERMLR (122 aa)) constitute a PLAT domain. Residues 1813–1833 (LCVCLLLFLGYACVNIIITHQ) form a helical membrane-spanning segment. Over 1834–1851 (RDDQLPFDLGVIDVTSVS) the chain is Extracellular. Residues 1852 to 1872 (IATGLVSVVAVLPVAMVISFL) traverse the membrane as a helical segment. Over 1873 to 2005 (FRVKSGRMTL…YRLASLLYHC (133 aa)) the chain is Cytoplasmic. A helical membrane pass occupies residues 2006–2026 (VAWTLCLLFCLSCLILSAVLG). The Extracellular segment spans residues 2027–2040 (TRLNSGKILHWIHS). Residues 2041 to 2061 (LFVSLTFCFFVIHPATILVLA) form a helical membrane-spanning segment. Topologically, residues 2062–2151 (AVVSWRFKRS…KQAVIHKMLR (90 aa)) are cytoplasmic. The chain crosses the membrane as a helical span at residues 2152–2172 (DLCLCGSMFFLMVCITYGSPV). Residues 2173–2344 (DEHYPLNAAF…QSVRLYHSPS (172 aa)) are Extracellular-facing. Asn2218 carries N-linked (GlcNAc...) asparagine glycosylation. The chain crosses the membrane as a helical span at residues 2345–2365 (MLDYTVMVWQLLFLLLSLVNL). The Cytoplasmic segment spans residues 2366-2378 (YHQTSTAAQHGLM). Residues 2379–2401 (GYWKTTSISVEVSLVIVSLVYYV) form a helical membrane-spanning segment. Over 2402–2442 (HYVYHPTMVMEVAEQLRRNHREHVDVSTLANSEQFSRTLRG) the chain is Extracellular. The chain crosses the membrane as a helical span at residues 2443–2463 (IILFLLAVKCVTVVRLNRILA). Residues 2464–2467 (PSMP) are Cytoplasmic-facing. The helical transmembrane segment at 2468 to 2488 (LLSLSSLLWPAISGLLLLSIF) threads the bilayer. The Extracellular portion of the chain corresponds to 2489–2528 (SCMGRLLYIERTFHSIQTVLWHFWSLRKSRDLISLWRDFY). The chain crosses the membrane as a helical span at residues 2529–2549 (YFGLLYASSAMLTTMVFAVMI). Topologically, residues 2550 to 2742 (RKAKRSPSTK…LVHHEQGTKN (193 aa)) are cytoplasmic.

Belongs to the polycystin family. As to quaternary structure, heterodimer. Interacts with pkd2 to form a calcium channel. Interacts with pkd2l1 to form ciliary calcium channel. As to expression, expressed in Kupffer's vesicle, an organ equivalent to the node.

The protein localises to the cell projection. The protein resides in the cilium membrane. Functionally, component of a calcium-permeant ion channel formed by PKD1L2 and PKD1L1 in primary cilia, where it controls cilium calcium concentration, without affecting cytoplasmic calcium concentration, and regulates sonic hedgehog/SHH signaling and GLI2 transcription. The PKD1L1:PKD2L1 channel complex is mechanosensitive only at high pressures and is highly temperature sensitive. Also involved in left/right axis specification downstream of nodal flow by forming a complex with PKD2 in cilia to facilitate flow detection in left/right patterning. In Oryzias latipes (Japanese rice fish), this protein is Polycystin-1-like protein 1.